A 301-amino-acid polypeptide reads, in one-letter code: Tegument protein VP22 (301 aa).

The disordered stretch occupies residues 1-171; the sequence is MTSRRSVKSG…PTRSKTPAQG (171 aa). The segment covering 113-124 has biased composition (low complexity); that stretch reads RTPTTAPRAPRT. Residues 163-166 carry the Nuclear localization signal motif; that stretch reads TRSK. Positions 174 to 267 are interaction with gE; it reads RKLHFSTAPP…LVNPDVVQDV (94 aa). Residues 232–244 carry the Nuclear export signal motif; sequence LNELLGITTIRVT. Positions 269–281 are enriched in low complexity; sequence AATATRGRSAASR. The interval 269–301 is disordered; the sequence is AATATRGRSAASRPTERPRAPARSASRPRRPVE.

It belongs to the alphaherpesvirinae VP22 tegument protein family. As to quaternary structure, interacts with gE (via C-terminus); this interaction is necessary for the recruitment of VP22 to the Golgi and its packaging into virions. Interacts with gM (via C-terminus). Interacts with VP16; this interaction allows the formation of a tripartite complex composed of VP16, VP22 and UL41/VHS. According to a report interacts with gD (via C-terminus). According another publication, does not interact with gD. Interacts with host CGAS. Interacts with host SET; this interaction may interfere with SET-mediated nucleosomal deposition onto the viral genome. Interacts with the capsid-binding protein UL16. Highly phosphorylated in the host cell. Packaging is selective for underphosphorylated forms.

It localises to the virion tegument. The protein resides in the host cytoplasm. Its subcellular location is the host nucleus. The protein localises to the host Golgi apparatus. Tegument protein that plays different roles during the time course of infection. Participates in both the accumulation of viral mRNAs and viral protein translation at late time of infection. Modulates the RNase activity of the virion host shutoff protein UL41 probably to ensure necessary levels of key cellular mRNAs and proteins. Plays a role in microtubule reorganization that occurs after viral infection by stabilizing microtubule network. Finally, may prevent nucleosomal deposition onto the viral genome by interacting with and inhibiting host SET. Plays a role in the inhibition of host innate immune system by targeting the CGAS enzymatic activity which is the principal cytosolic DNA sensor that detects invading viral DNA. Acts by mediating disruption of liquid-like droplets in which CGAS is activated, thereby preventing CGAS activity. This is Tegument protein VP22 from Human herpesvirus 1 (strain 17) (HHV-1).